The primary structure comprises 111 residues: Flagellar hook-basal body complex protein FliE (111 aa).

Belongs to the FliE family.

Its subcellular location is the bacterial flagellum basal body. The protein is Flagellar hook-basal body complex protein FliE of Clostridium acetobutylicum (strain ATCC 824 / DSM 792 / JCM 1419 / IAM 19013 / LMG 5710 / NBRC 13948 / NRRL B-527 / VKM B-1787 / 2291 / W).